A 128-amino-acid chain; its full sequence is Ribonuclease P protein component (128 aa).

Belongs to the RnpA family. In terms of assembly, consists of a catalytic RNA component (M1 or rnpB) and a protein subunit.

It catalyses the reaction Endonucleolytic cleavage of RNA, removing 5'-extranucleotides from tRNA precursor.. In terms of biological role, RNaseP catalyzes the removal of the 5'-leader sequence from pre-tRNA to produce the mature 5'-terminus. It can also cleave other RNA substrates such as 4.5S RNA. The protein component plays an auxiliary but essential role in vivo by binding to the 5'-leader sequence and broadening the substrate specificity of the ribozyme. In Synechococcus sp. (strain CC9902), this protein is Ribonuclease P protein component.